Consider the following 187-residue polypeptide: Frequenin-1 (187 aa).

G2 carries the N-myristoyl glycine lipid modification. 4 EF-hand domains span residues 24–59, 60–95, 96–131, and 143–178; these read EKEI…FPQG, DPSK…TSKG, NLDE…IYQM, and TPQK…DPRI. Ca(2+) contacts are provided by D73, N75, D77, S79, E84, D109, D111, D113, Y115, E120, D156, N158, D160, K162, and E167.

It belongs to the recoverin family. In contrast to Frq2, does not interact with ric8a. As to expression, enriched in synapses, such as the motor nerve endings at neuromuscular junctions. In the embryo, highly expressed in the ventral ganglia.

The protein localises to the cytoplasm. Its function is as follows. Ca(2+)-dependent modulation of synaptic efficacy. Also plays a role in axon terminal morphology. The protein is Frequenin-1 (Frq1) of Drosophila melanogaster (Fruit fly).